We begin with the raw amino-acid sequence, 312 residues long: tRNA U34 carboxymethyltransferase (312 aa).

Carboxy-S-adenosyl-L-methionine-binding positions include K88, W102, K107, G127, 149-151 (DPS), 177-178 (LD), M191, Y195, and R304.

The protein belongs to the class I-like SAM-binding methyltransferase superfamily. CmoB family. In terms of assembly, homotetramer.

The enzyme catalyses carboxy-S-adenosyl-L-methionine + 5-hydroxyuridine(34) in tRNA = 5-carboxymethoxyuridine(34) in tRNA + S-adenosyl-L-homocysteine + H(+). Catalyzes carboxymethyl transfer from carboxy-S-adenosyl-L-methionine (Cx-SAM) to 5-hydroxyuridine (ho5U) to form 5-carboxymethoxyuridine (cmo5U) at position 34 in tRNAs. This is tRNA U34 carboxymethyltransferase from Dichelobacter nodosus (strain VCS1703A).